We begin with the raw amino-acid sequence, 296 residues long: MESVSSRGGDPVVKPSMEVWHFQIAVYFAFGFFFLRLVLDRYVFQRIALWLLSTGSAPIKLNDAATRAKIVKCKESLWKLLYYAACDFFVLQVIYHEPWARDIKLYFHGWPNQELKLSIKLYYMCQCGFYVYGVAALLAWETRRKDFAVMMSHHVITIILLSYSYLTSFFRIGAIILALHDASDVFMETAKIFKYSEKEFGASVCFALFAVSWLLLRLIYFPFWIIRATSIELLDYLDMTSAEGTLMYYSFNTMLLMLLVFHIYWWYLICAMIVRLLKNRGKVGEDIRSDSEDDDD.

6 helical membrane passes run 19 to 39, 80 to 100, 121 to 141, 158 to 178, 206 to 226, and 254 to 274; these read VWHF…RLVL, LLYY…EPWA, LYYM…LAWE, IILL…IILA, FALF…FWII, and MLLM…AMIV. The 208-residue stretch at 71-278 folds into the TLC domain; sequence VKCKESLWKL…ICAMIVRLLK (208 aa). Phosphoserine is present on residues Ser-289 and Ser-291.

In terms of tissue distribution, expressed ubiquitously with highest levels in pollen.

The protein resides in the endoplasmic reticulum membrane. The catalysed reaction is a sphingoid base + hexadecanoyl-CoA = an N-hexadecanoyl-sphingoid base + CoA + H(+). It catalyses the reaction sphinganine + hexadecanoyl-CoA = N-hexadecanoylsphinganine + CoA + H(+). It carries out the reaction sphing-4-enine + hexadecanoyl-CoA = N-hexadecanoylsphing-4-enine + CoA + H(+). The enzyme catalyses sphinga-(4E,8E)-dienine + hexadecanoyl-CoA = N-hexadecanoylsphinga-(4E,8E)-dienine + CoA + H(+). The catalysed reaction is sphinga-(4E,8Z)-dienine + hexadecanoyl-CoA = N-hexadecanoylsphinga-(4E,8Z)-dienine + CoA + H(+). It participates in sphingolipid metabolism. Inhibited by the mycotoxin fumonisin B(1), a sphingosine analog mycotoxins produced by pathogenic fungi. Activated by divalent cation such as magnesium Mg(2+), zinc Zn(2+), manganese Mn(2+) and calcium Ca(2+). Its function is as follows. Prevents cell division in root meristems and promotes salicylic acid (SA) production and hypersensitive response (HR). Catalyzes the biosynthesis of ceramide sphingolipids with C(16) fatty acids, structural membrane lipids involved in membrane trafficking (e.g. early endosomes) and cell polarity (e.g. polar auxin transport related proteins); accepts only C16:0 fatty acids, but with a wide range of d18 sphingoid bases, such as sphinganine (d18:0) and palmitoyl-CoA. Mediates resistance to sphinganine-analog mycotoxins (SAMs, e.g. fumonisin B(1)) by restoring the sphingolipid biosynthesis. Could salvage the transport of GPI-anchored proteins from the endoplasmic reticulum to the Golgi apparatus in ceramides-depleted cells after SAM exposure. Contributes to hypoxic conditions tolerance (e.g. submergences), especially in the dark, by promoting the formation of very-long-chain (VLC) ceramide species (22:1, 24:1 and 26:1) and of VLC unsaturated ceramides, which are modulating CTR1-mediated ethylene signaling leading to endoplasmic reticulum (ER)-to-nucleus translocation of EIN2 and EIN3. In Arabidopsis thaliana (Mouse-ear cress), this protein is Ceramide synthase LOH2.